We begin with the raw amino-acid sequence, 322 residues long: Mycothiol acetyltransferase (322 aa).

N-acetyltransferase domains are found at residues 5-150 (SWLR…DPDD) and 160-322 (VTIR…PARG). Residue Glu-36 coordinates 1D-myo-inositol 2-(L-cysteinylamino)-2-deoxy-alpha-D-glucopyranoside. Acetyl-CoA contacts are provided by residues 79-81 (LVV) and 87-92 (RRGVGT). Glu-187, Lys-226, and Glu-252 together coordinate 1D-myo-inositol 2-(L-cysteinylamino)-2-deoxy-alpha-D-glucopyranoside. An acetyl-CoA-binding site is contributed by 256-258 (VGV). Tyr-290 provides a ligand contact to 1D-myo-inositol 2-(L-cysteinylamino)-2-deoxy-alpha-D-glucopyranoside. Position 295 to 300 (295 to 300 (NARAVR)) interacts with acetyl-CoA.

The protein belongs to the acetyltransferase family. MshD subfamily. As to quaternary structure, monomer.

It carries out the reaction 1D-myo-inositol 2-(L-cysteinylamino)-2-deoxy-alpha-D-glucopyranoside + acetyl-CoA = mycothiol + CoA + H(+). Catalyzes the transfer of acetyl from acetyl-CoA to desacetylmycothiol (Cys-GlcN-Ins) to form mycothiol. This Parafrankia sp. (strain EAN1pec) protein is Mycothiol acetyltransferase.